Here is a 453-residue protein sequence, read N- to C-terminus: Ribosomal protein uS12 methylthiotransferase RimO (453 aa).

Positions 5–120 (PKVGFVSLGC…VMQAVHSHLP (116 aa)) constitute an MTTase N-terminal domain. Cysteine 14, cysteine 50, cysteine 79, cysteine 151, cysteine 155, and cysteine 158 together coordinate [4Fe-4S] cluster. Residues 137–382 (LTPRHYAYLK…MEVAEEVSAR (246 aa)) form the Radical SAM core domain. Positions 385 to 453 (ARKVGKTLKV…ADGHDLWGEV (69 aa)) constitute a TRAM domain.

This sequence belongs to the methylthiotransferase family. RimO subfamily. [4Fe-4S] cluster is required as a cofactor.

The protein resides in the cytoplasm. The enzyme catalyses L-aspartate(89)-[ribosomal protein uS12]-hydrogen + (sulfur carrier)-SH + AH2 + 2 S-adenosyl-L-methionine = 3-methylsulfanyl-L-aspartate(89)-[ribosomal protein uS12]-hydrogen + (sulfur carrier)-H + 5'-deoxyadenosine + L-methionine + A + S-adenosyl-L-homocysteine + 2 H(+). Functionally, catalyzes the methylthiolation of an aspartic acid residue of ribosomal protein uS12. This is Ribosomal protein uS12 methylthiotransferase RimO from Burkholderia multivorans (strain ATCC 17616 / 249).